The chain runs to 347 residues: Protein RecA (347 aa).

64 to 71 (GPESSGKT) is a binding site for ATP.

Belongs to the RecA family.

Its subcellular location is the cytoplasm. Functionally, can catalyze the hydrolysis of ATP in the presence of single-stranded DNA, the ATP-dependent uptake of single-stranded DNA by duplex DNA, and the ATP-dependent hybridization of homologous single-stranded DNAs. It interacts with LexA causing its activation and leading to its autocatalytic cleavage. The sequence is that of Protein RecA from Bartonella henselae (strain ATCC 49882 / DSM 28221 / CCUG 30454 / Houston 1) (Rochalimaea henselae).